Reading from the N-terminus, the 73-residue chain is Large ribosomal subunit protein uL30 (73 aa).

It belongs to the universal ribosomal protein uL30 family. In terms of assembly, part of the 50S ribosomal subunit.

The polypeptide is Large ribosomal subunit protein uL30 (Borreliella afzelii (strain PKo) (Borrelia afzelii)).